Consider the following 154-residue polypeptide: Protein-export protein SecB (154 aa).

Belongs to the SecB family. Homotetramer, a dimer of dimers. One homotetramer interacts with 1 SecA dimer.

It localises to the cytoplasm. One of the proteins required for the normal export of preproteins out of the cell cytoplasm. It is a molecular chaperone that binds to a subset of precursor proteins, maintaining them in a translocation-competent state. It also specifically binds to its receptor SecA. The polypeptide is Protein-export protein SecB (Buchnera aphidicola subsp. Schizaphis graminum (strain Sg)).